We begin with the raw amino-acid sequence, 459 residues long: MDLDTITSISTPMGEGAIGIVRLSGPQAVEIADKLYKGKHLLNDVPSHTINYGHIIDPESKEVIEEVMVSVLRAPKTFTREDIIEINCHGGILTINRVLELTMTYGARMAEPGEFTKRAFLNGRIDLSQAEAVMDFIRSKTDRASKVAMNQIEGRLSDLIKKQRQSILEILAQVEVNIDYPEYDDVEDATTEFLLEQSKEIKQEINRLLDTGAQGKIMREGLSTVIVGKPNVGKSSMLNNLIQDNKAIVTEVAGTTRDVLEEYVNVRGVPLRLVDTAGIRETEDIVEKIGVERSRKALSQADLILFVLNNNEALTQEDYTLYEVVKNEDVIVIVNKMDLEQNIDINEVKDMIGDTPLIQTSMLKQEGIDELEIQIRDLFFGGEVQNQDMTYVSNSRHISLLKQARQTIQDAIDAAESGVPMDMVQIDLTRTWEILGEIIGETASDELIDQLFSQFCLGK.

(6S)-5-formyl-5,6,7,8-tetrahydrofolate is bound by residues R22, E85, and R124. A TrmE-type G domain is found at 221-380 (GLSTVIVGKP…LEIQIRDLFF (160 aa)). N231 is a K(+) binding site. GTP-binding positions include 231–236 (NVGKSS), 250–256 (TEVAGTT), and 275–278 (DTAG). Position 235 (S235) interacts with Mg(2+). T250, V252, and T255 together coordinate K(+). A Mg(2+)-binding site is contributed by T256. K459 is a (6S)-5-formyl-5,6,7,8-tetrahydrofolate binding site.

The protein belongs to the TRAFAC class TrmE-Era-EngA-EngB-Septin-like GTPase superfamily. TrmE GTPase family. Homodimer. Heterotetramer of two MnmE and two MnmG subunits. K(+) is required as a cofactor.

Its subcellular location is the cytoplasm. In terms of biological role, exhibits a very high intrinsic GTPase hydrolysis rate. Involved in the addition of a carboxymethylaminomethyl (cmnm) group at the wobble position (U34) of certain tRNAs, forming tRNA-cmnm(5)s(2)U34. This chain is tRNA modification GTPase MnmE, found in Staphylococcus aureus (strain USA300 / TCH1516).